A 378-amino-acid polypeptide reads, in one-letter code: uncharacterized protein (378 aa).

Transmembrane regions (helical) follow at residues 12 to 34 (SLAF…STFF), 44 to 66 (VKIY…IFLG), 92 to 112 (SIAL…LMLI), 132 to 154 (GFAS…IFLA), 161 to 180 (EVYA…SIIT), 200 to 222 (TFLL…IAMM), 235 to 257 (VEIY…FWGV), 267 to 285 (VFPL…LFFA), 290 to 312 (LIFV…RVYI), 327 to 349 (FLSL…FLFI), and 356 to 373 (LSAL…FIYL).

Its subcellular location is the cell membrane. This is an uncharacterized protein from Aquifex aeolicus (strain VF5).